The chain runs to 352 residues: C-C chemokine receptor type 5 (352 aa).

Topologically, residues 1 to 30 are extracellular; it reads MDYQVSSPTYDIDYNTSEPCQKINVKQIAA. Y3 carries the sulfotyrosine modification. S6 and S7 each carry an O-linked (GalNAc...) serine glycan. Residues Y10 and Y14 each carry the sulfotyrosine modification. Intrachain disulfides connect C20–C269 and C101–C178. The helical transmembrane segment at 31 to 58 threads the bilayer; the sequence is RLLPLLYSLVFIFGFVGNILVVLILINC. Residues 59–68 are Cytoplasmic-facing; the sequence is KRLKSMTDIY. A helical membrane pass occupies residues 69 to 89; it reads LLNLAISDLLFLLTVPFWAHY. Over 90-102 the chain is Extracellular; it reads AAAQWDFGNTMCQ. A helical transmembrane segment spans residues 103–124; that stretch reads LLTGLYFIGFFSGIFFIILLTI. At 125 to 141 the chain is on the cytoplasmic side; that stretch reads DRYLAIVHAVFALKART. Residues 142–166 traverse the membrane as a helical segment; the sequence is VTFGVVTSVITWVVAVFASLPRIIF. Over 167–198 the chain is Extracellular; sequence TRSQREGLHYTCSSHFPYSQYQFWKNFQTLKI. A helical membrane pass occupies residues 199–218; that stretch reads VILGLVLPLLVMVICYSGIL. Topologically, residues 219 to 235 are cytoplasmic; sequence KTLLRCRNEKKRHRAVR. The helical transmembrane segment at 236–260 threads the bilayer; sequence LIFTIMIVYFLFWAPYNIVLLLNTF. Topologically, residues 261–277 are extracellular; that stretch reads QEFFGLNNCSSSNRLDQ. The chain crosses the membrane as a helical span at residues 278–301; the sequence is AMQVTETLGMTHCCINPIIYAFVG. The Cytoplasmic portion of the chain corresponds to 302 to 352; sequence EKFRNYLLVFFQKHIAKRFCKCCSIFQQEAPERASSVYTRSTGEQEISVGL. 3 S-palmitoyl cysteine lipidation sites follow: C321, C323, and C324. 4 positions are modified to phosphoserine; by BARK1: S336, S337, S342, and S349.

It belongs to the G-protein coupled receptor 1 family. In terms of assembly, interacts with PRAF2. Efficient ligand binding to CCL3/MIP-1alpha and CCL4/MIP-1beta requires sulfation, O-glycosylation and sialic acid modifications. Glycosylation on Ser-6 is required for efficient binding of CCL4. Interacts with GRK2. Interacts with ARRB1 and ARRB2. Interacts with CNIH4. Interacts with S100A4; this interaction stimulates T-lymphocyte chemotaxis. In terms of processing, sulfated on at least 2 of the N-terminal tyrosines. Sulfation is required for efficient binding of the chemokines, CCL3 and CCL4. Post-translationally, palmitoylation in the C-terminal is important for cell surface expression. Phosphorylation on serine residues in the C-terminal is stimulated by binding CC chemokines especially by APO-RANTES. In terms of processing, O-glycosylated, but not N-glycosylated. Ser-6 appears to be the major site even if Ser-7 may be also O-glycosylated. Also sialylated glycans present which contribute to chemokine binding. Thr-16 and Ser-17 may also be glycosylated and, if so, with small moieties such as a T-antigen.

The protein resides in the cell membrane. Its function is as follows. Receptor for a number of inflammatory CC-chemokines including CCL3/MIP-1-alpha, CCL4/MIP-1-beta and RANTES and subsequently transduces a signal by increasing the intracellular calcium ion level. May play a role in the control of granulocytic lineage proliferation or differentiation. Participates in T-lymphocyte migration to the infection site by acting as a chemotactic receptor. This Cercopithecus cephus (Moustached monkey) protein is C-C chemokine receptor type 5 (CCR5).